The primary structure comprises 252 residues: Imidazole glycerol phosphate synthase subunit HisF (252 aa).

Catalysis depends on residues aspartate 11 and aspartate 130.

This sequence belongs to the HisA/HisF family. In terms of assembly, heterodimer of HisH and HisF.

The protein localises to the cytoplasm. The enzyme catalyses 5-[(5-phospho-1-deoxy-D-ribulos-1-ylimino)methylamino]-1-(5-phospho-beta-D-ribosyl)imidazole-4-carboxamide + L-glutamine = D-erythro-1-(imidazol-4-yl)glycerol 3-phosphate + 5-amino-1-(5-phospho-beta-D-ribosyl)imidazole-4-carboxamide + L-glutamate + H(+). The protein operates within amino-acid biosynthesis; L-histidine biosynthesis; L-histidine from 5-phospho-alpha-D-ribose 1-diphosphate: step 5/9. Functionally, IGPS catalyzes the conversion of PRFAR and glutamine to IGP, AICAR and glutamate. The HisF subunit catalyzes the cyclization activity that produces IGP and AICAR from PRFAR using the ammonia provided by the HisH subunit. This is Imidazole glycerol phosphate synthase subunit HisF from Staphylococcus aureus (strain Mu3 / ATCC 700698).